We begin with the raw amino-acid sequence, 88 residues long: Small ribosomal subunit protein bS20 (88 aa).

Belongs to the bacterial ribosomal protein bS20 family.

Its function is as follows. Binds directly to 16S ribosomal RNA. The sequence is that of Small ribosomal subunit protein bS20 from Micrococcus luteus (strain ATCC 4698 / DSM 20030 / JCM 1464 / CCM 169 / CCUG 5858 / IAM 1056 / NBRC 3333 / NCIMB 9278 / NCTC 2665 / VKM Ac-2230) (Micrococcus lysodeikticus).